The sequence spans 244 residues: Derlin-2.2 (244 aa).

At 1 to 21 (MAQAVEEWYKQMPIITRSYLT) the chain is on the cytoplasmic side. A helical transmembrane segment spans residues 22–42 (AAVITTVGCSLDIISPYNLYL). Residues 43–96 (NPTLVVKQYQYWRLVTNFLYFRKMDLDFMFHMFFLARYCKLLEENSFRGKTADF) are Lumenal-facing. A helical transmembrane segment spans residues 97–117 (LYMLLFGASVLTGIVLIGGMI). Residues 118-121 (PYLS) are Cytoplasmic-facing. A helical membrane pass occupies residues 122-142 (ASFAKIIFLSNSLTFMMVYVW). Topologically, residues 143 to 152 (SKQNPYIHMS) are lumenal. The chain crosses the membrane as a helical span at residues 153-173 (FLGLFTFTAAYLPWVLLGFSI). Residues 174–244 (LVGASAWVDL…AAPFDEIHQD (71 aa)) are Cytoplasmic-facing.

The protein belongs to the derlin family.

Its subcellular location is the endoplasmic reticulum membrane. In terms of biological role, may be involved in the degradation process of specific misfolded endoplasmic reticulum (ER) luminal proteins. This is Derlin-2.2 (DER2.2) from Arabidopsis thaliana (Mouse-ear cress).